Here is a 626-residue protein sequence, read N- to C-terminus: Endogenous retrovirus group S71 member 1 Env polyprotein (626 aa).

An N-terminal signal peptide occupies residues 1–38 (MGPEAWVRPLKTAPKPGEAIRLILFIYLSCFFLPVMSS). The surface protein stretch occupies residues 39–438 (EPSYSFLLTS…PPELHPRLHQ (400 aa)). The Extracellular segment spans residues 39–575 (EPSYSFLLTS…FNWNPWLTTL (537 aa)). The CXXC motif lies at 302-305 (CWLC). Residues 439–459 (AVPLLVPLLAGLSIAGSAAIG) form a fusion peptide region. The interval 439-626 (AVPLLVPLLA…KTQYDTLVNN (188 aa)) is transmembrane protein. A CKS-17 motif is present at residues 503–519 (LQNCRCLDLLFLSQGGL). Cys-520 and Cys-527 are joined by a disulfide. The short motif at 520–528 (CAALGESCC) is the CX6CC element. Residues 576 to 596 (ITGLAGPLLILLLSLIFGPCI) traverse the membrane as a helical segment. The Cytoplasmic segment spans residues 597–626 (LNSFLNFIKQRIASVKLTYLKTQYDTLVNN).

It belongs to the gamma type-C retroviral envelope protein family. HERV class-I T env subfamily. In terms of processing, the CXXC motif is highly conserved across a broad range of retroviral envelope proteins. It is thought to participate in the formation of a labile disulfide bond possibly with the CX6CC motif present in the transmembrane domain. As to expression, expressed at higher level in thyroid. Expressed at lower level in adrenal, bone marrow, brain, breast, kidney, ovary, placenta, prostate, skin, testis and trachea.

Its subcellular location is the cell membrane. Its function is as follows. Retroviral envelope proteins mediate receptor recognition and membrane fusion during early infection. Endogenous envelope proteins may have kept, lost or modified their original function during evolution. This endogenous envelope protein has lost its original fusogenic properties. The protein is Endogenous retrovirus group S71 member 1 Env polyprotein (ERVS71-1) of Homo sapiens (Human).